Consider the following 465-residue polypeptide: Cysteine--tRNA ligase (465 aa).

Cysteine 29 is a binding site for Zn(2+). The 'HIGH' region signature appears at 31–41 (PTVYNYIHIGN). 3 residues coordinate Zn(2+): cysteine 209, histidine 234, and glutamate 238. The short motif at 266-270 (KMSKS) is the 'KMSKS' region element. Residue lysine 269 coordinates ATP. At serine 270 the chain carries Phosphoserine.

This sequence belongs to the class-I aminoacyl-tRNA synthetase family. As to quaternary structure, monomer. It depends on Zn(2+) as a cofactor.

It localises to the cytoplasm. It catalyses the reaction tRNA(Cys) + L-cysteine + ATP = L-cysteinyl-tRNA(Cys) + AMP + diphosphate. This Bacillus cereus (strain B4264) protein is Cysteine--tRNA ligase.